The primary structure comprises 177 residues: Large ribosomal subunit protein uL6 (177 aa).

It belongs to the universal ribosomal protein uL6 family. Part of the 50S ribosomal subunit.

Functionally, this protein binds to the 23S rRNA, and is important in its secondary structure. It is located near the subunit interface in the base of the L7/L12 stalk, and near the tRNA binding site of the peptidyltransferase center. The protein is Large ribosomal subunit protein uL6 of Methylobacterium nodulans (strain LMG 21967 / CNCM I-2342 / ORS 2060).